Here is a 1135-residue protein sequence, read N- to C-terminus: Envelopment polyprotein (1135 aa).

The N-terminal stretch at 1–18 (MIMWGLLLTMILIDFGAS) is a signal peptide. Residues 19–495 (LRNVYDMKIE…ALLTTFCFGW (477 aa)) lie on the Lumenal side of the membrane. Cystine bridges form between Cys-29–Cys-151, Cys-63–Cys-157, Cys-109–Cys-128, Cys-133–Cys-138, Cys-175–Cys-185, Cys-210–Cys-247, Cys-234–Cys-351, Cys-376–Cys-435, Cys-380–Cys-389, Cys-405–Cys-424, and Cys-452–Cys-475. A glycan (N-linked (GlcNAc...) asparagine; by host) is linked at Asn-134. N-linked (GlcNAc...) asparagine; by host glycosylation is found at Asn-235 and Asn-347. Asn-399 carries an N-linked (GlcNAc...) asparagine; by host glycan. Residues 496–516 (ILILSITLAVLVVLKFFAAIL) traverse the membrane as a helical segment. The segment at 516-533 (LHNSSQENRFKIILRKIK) is binding to the ribonucleoprotein. Residues 517-627 (HNSSQENRFK…LNLFRYKSRC (111 aa)) are Cytoplasmic-facing. CCHC-type zinc fingers lie at residues 545–565 (CEVCKYECETGKELKAHNLSC) and 570–591 (CPYCFTHCEPTESAFQAHYKVC). 3 binding to the ribonucleoprotein regions span residues 588 to 605 (YKVCQATHRFRDDLKKTI), 592 to 603 (QATHRFRDDLKK), and 611 to 625 (SPGCYRTLNLFRYKS). Residues 611 to 634 (SPGCYRTLNLFRYKSRCYIFTVWV) form the ITAM domain. 2 positions are modified to phosphotyrosine: Tyr-615 and Tyr-628. Residues 615-618 (YRTL) carry the YxxL motif. A helical transmembrane segment spans residues 628-648 (YIFTVWVTLLIIESIMWAASA). Topologically, residues 649-1105 (SETVLEPSWN…EWITGIFNGN (457 aa)) are lumenal. 8 disulfides stabilise this stretch: Cys-735–Cys-770, Cys-739–Cys-777, Cys-751–Cys-885, Cys-765–Cys-896, Cys-780–Cys-904, Cys-806–Cys-815, Cys-823–Cys-832, and Cys-863–Cys-867. The tract at residues 757–777 (FEYENNWGCNPADCPGIGTGC) is fusion loop. Asn-928 is a glycosylation site (N-linked (GlcNAc...) asparagine; by host). 5 cysteine pairs are disulfide-bonded: Cys-970–Cys-1000, Cys-993–Cys-1045, Cys-1010–Cys-1015, Cys-1046–Cys-1051, and Cys-1085–Cys-1089. The chain crosses the membrane as a helical span at residues 1106-1126 (WIVIVVLVFFFILSLILLSLL). The interval 1122–1135 (LLSLLCPIRKHKRS) is binding to the ribonucleoprotein. At 1127–1135 (CPIRKHKRS) the chain is on the cytoplasmic side.

It belongs to the hantavirus envelope glycoprotein family. In terms of assembly, homodimer. Homotetramer; forms heterotetrameric Gn-Gc spikes in the pre-fusion conformation. Interacts (via C-terminus) with the nucleoprotein. Interacts with host TUFM; this interaction contributes to the virus-induced degradation of mitochondria by autophagy, which leads to degradation of host MAVS and inhibition of type I interferon (IFN) responses. Interacts with host MAP1LC3B; this interaction contributes to the virus-induced degradation of mitochondria by autophagy, which leads to degradation of host MAVS and inhibition of type I interferon (IFN) responses. Homodimer. Homotetramer; forms heterotetrameric Gn-Gc spikes in the pre-fusion conformation. Homotrimer; forms homotrimer in the post-fusion conformation at acidic pH. Interacts (via C-terminus) with the nucleoprotein. Envelope polyprotein precursor is quickly cleaved in vivo just after synthesis, presumably by host signal peptidase.

It localises to the virion membrane. The protein localises to the host cell surface. Its subcellular location is the host Golgi apparatus membrane. The protein resides in the host endoplasmic reticulum membrane. It is found in the host mitochondrion. Its function is as follows. Forms homotetramers with glycoprotein C at the surface of the virion. Attaches the virion to host cell receptors including integrin ITGAV/ITGB3. This attachment induces virion internalization predominantly through clathrin-dependent endocytosis. Mediates the assembly and budding of infectious virus particles through its interaction with the nucleocapsid protein and the viral genome. May dysregulate normal immune and endothelial cell responses through an ITAM motif. Translocates to mitochondria, binds to host TUFM and recruits MAP1LC3B. These interactions induce mitochondrial autophagy and therefore destruction of host MAVS leading to inhibition of type I interferon (IFN) responses. Concomitant breakdown of glycoprotein N is apparently prevented by the nucleoprotein that may inhibit Gn-stimulated autophagosome-lysosome fusion. Interacts with the viral genomic RNA. In terms of biological role, forms homotetramers with glycoprotein N at the surface of the virion. Attaches the virion to host cell receptors including integrin ITGAV/ITGB3. This attachment induces virion internalization predominantly through clathrin-dependent endocytosis. Class II fusion protein that promotes fusion of viral membrane with host endosomal membrane after endocytosis of the virion. The chain is Envelopment polyprotein (GP) from Dobrava-Belgrade orthohantavirus (DOBV).